Reading from the N-terminus, the 90-residue chain is Phosphocarrier protein NPr (90 aa).

The HPr domain maps to 2–90 (TVKQTVEITN…ALFNSGFDED (89 aa)). The Pros-phosphohistidine intermediate role is filled by His-16.

Belongs to the HPr family.

Its subcellular location is the cytoplasm. Functionally, component of the phosphoenolpyruvate-dependent nitrogen-metabolic phosphotransferase system (nitrogen-metabolic PTS), that seems to be involved in regulating nitrogen metabolism. The phosphoryl group from phosphoenolpyruvate (PEP) is transferred to the phosphoryl carrier protein NPr by enzyme I-Ntr. Phospho-NPr then transfers it to EIIA-Ntr. Could function in the transcriptional regulation of sigma-54 dependent operons in conjunction with the NPr (PtsO) and EIIA-Ntr (PtsN) proteins. This Escherichia coli O157:H7 protein is Phosphocarrier protein NPr (ptsO).